Here is a 385-residue protein sequence, read N- to C-terminus: Arginine biosynthesis bifunctional protein ArgJ (385 aa).

Substrate-binding residues include Thr142, Lys168, Thr179, Glu259, Asn380, and Thr385. The active-site Nucleophile is Thr179.

Belongs to the ArgJ family. Heterotetramer of two alpha and two beta chains.

Its subcellular location is the cytoplasm. The catalysed reaction is N(2)-acetyl-L-ornithine + L-glutamate = N-acetyl-L-glutamate + L-ornithine. It carries out the reaction L-glutamate + acetyl-CoA = N-acetyl-L-glutamate + CoA + H(+). Its pathway is amino-acid biosynthesis; L-arginine biosynthesis; L-ornithine and N-acetyl-L-glutamate from L-glutamate and N(2)-acetyl-L-ornithine (cyclic): step 1/1. The protein operates within amino-acid biosynthesis; L-arginine biosynthesis; N(2)-acetyl-L-ornithine from L-glutamate: step 1/4. Functionally, catalyzes two activities which are involved in the cyclic version of arginine biosynthesis: the synthesis of N-acetylglutamate from glutamate and acetyl-CoA as the acetyl donor, and of ornithine by transacetylation between N(2)-acetylornithine and glutamate. In Leptospira interrogans serogroup Icterohaemorrhagiae serovar copenhageni (strain Fiocruz L1-130), this protein is Arginine biosynthesis bifunctional protein ArgJ.